The primary structure comprises 150 residues: Catabolic 3-dehydroquinase (150 aa).

The Proton acceptor role is filled by tyrosine 24. 3 residues coordinate substrate: asparagine 75, histidine 81, and aspartate 88. Residue histidine 101 is the Proton donor of the active site. Substrate is bound by residues 102–103 (VS) and arginine 112.

This sequence belongs to the type-II 3-dehydroquinase family. In terms of assembly, homododecamer. Adopts a ring-like structure, composed of an arrangement of two hexameric rings stacked on top of one another.

It catalyses the reaction 3-dehydroquinate = 3-dehydroshikimate + H2O. It participates in aromatic compound metabolism; 3,4-dihydroxybenzoate biosynthesis; 3,4-dihydroxybenzoate from 3-dehydroquinate: step 1/2. Functionally, is involved in the catabolism of quinate. Allows the utilization of quinate as carbon source via the beta-ketoadipate pathway. This is Catabolic 3-dehydroquinase from Aspergillus clavatus (strain ATCC 1007 / CBS 513.65 / DSM 816 / NCTC 3887 / NRRL 1 / QM 1276 / 107).